The following is a 415-amino-acid chain: Imidazolonepropionase (415 aa).

Histidine 76 and histidine 78 together coordinate Fe(3+). Zn(2+) is bound by residues histidine 76 and histidine 78. 4-imidazolone-5-propanoate is bound by residues arginine 85, tyrosine 148, and histidine 181. Residue tyrosine 148 coordinates N-formimidoyl-L-glutamate. Histidine 246 is a Fe(3+) binding site. Position 246 (histidine 246) interacts with Zn(2+). Glutamate 249 contributes to the 4-imidazolone-5-propanoate binding site. Position 320 (aspartate 320) interacts with Fe(3+). Aspartate 320 is a Zn(2+) binding site. 2 residues coordinate N-formimidoyl-L-glutamate: asparagine 322 and glycine 324. Threonine 325 is a binding site for 4-imidazolone-5-propanoate.

Belongs to the metallo-dependent hydrolases superfamily. HutI family. The cofactor is Zn(2+). It depends on Fe(3+) as a cofactor.

It is found in the cytoplasm. The catalysed reaction is 4-imidazolone-5-propanoate + H2O = N-formimidoyl-L-glutamate. It participates in amino-acid degradation; L-histidine degradation into L-glutamate; N-formimidoyl-L-glutamate from L-histidine: step 3/3. Functionally, catalyzes the hydrolytic cleavage of the carbon-nitrogen bond in imidazolone-5-propanoate to yield N-formimidoyl-L-glutamate. It is the third step in the universal histidine degradation pathway. This is Imidazolonepropionase from Caldanaerobacter subterraneus subsp. tengcongensis (strain DSM 15242 / JCM 11007 / NBRC 100824 / MB4) (Thermoanaerobacter tengcongensis).